We begin with the raw amino-acid sequence, 61 residues long: Metallothionein-1L (61 aa).

Residues methionine 1 to cysteine 29 form a beta region. The a divalent metal cation site is built by cysteine 5, cysteine 7, cysteine 13, cysteine 15, cysteine 19, cysteine 21, cysteine 24, cysteine 26, cysteine 29, cysteine 33, cysteine 34, cysteine 36, cysteine 37, cysteine 41, cysteine 44, cysteine 48, cysteine 50, cysteine 57, cysteine 59, and cysteine 60. The tract at residues lysine 30–alanine 61 is alpha.

This sequence belongs to the metallothionein superfamily. Type 1 family. Monomer. Expressed in reticulocytes.

In terms of biological role, metallothioneins have a high content of cysteine residues that bind various heavy metals; these proteins are transcriptionally regulated by both heavy metals and glucocorticoids. This chain is Metallothionein-1L (MT1L), found in Homo sapiens (Human).